A 1139-amino-acid polypeptide reads, in one-letter code: Tip attachment protein J (1139 aa).

This sequence belongs to the Caudoviricetes tip attachment protein J family. Post-translationally, ubiquitinated by the Bil antiviral defense system when the Bil system is expressed in E.coli MG1655 and infected with this virus, or when this protein is expressed in a strain with the Bil system.

Its subcellular location is the virion. The protein localises to the host cytoplasm. Attaches the virion to the host receptor, inducing viral DNA ejection. During tail assembly, initiates distal tail tip assembly. During virus entry to host cell, binds strongly to host receptor in an irreversible attachment. The binding induces structural changes in the tail leading to viral DNA injection. This is Tip attachment protein J from Escherichia phage SECphi4.